The sequence spans 494 residues: 3-octaprenyl-4-hydroxybenzoate carboxy-lyase (494 aa).

Asparagine 172 contributes to the Mn(2+) binding site. Residues 175–177 (IYR), 189–191 (RWL), and 194–195 (RG) each bind prenylated FMN. Glutamate 238 is a Mn(2+) binding site. Residue aspartate 287 is the Proton donor of the active site.

It belongs to the UbiD family. As to quaternary structure, homohexamer. Requires prenylated FMN as cofactor. Mn(2+) is required as a cofactor.

The protein localises to the cell membrane. The catalysed reaction is a 4-hydroxy-3-(all-trans-polyprenyl)benzoate + H(+) = a 2-(all-trans-polyprenyl)phenol + CO2. Its pathway is cofactor biosynthesis; ubiquinone biosynthesis. Catalyzes the decarboxylation of 3-octaprenyl-4-hydroxy benzoate to 2-octaprenylphenol, an intermediate step in ubiquinone biosynthesis. This is 3-octaprenyl-4-hydroxybenzoate carboxy-lyase from Cronobacter sakazakii (strain ATCC BAA-894) (Enterobacter sakazakii).